A 454-amino-acid polypeptide reads, in one-letter code: UPF0210 protein Memar_2269 (454 aa).

Belongs to the UPF0210 family.

The sequence is that of UPF0210 protein Memar_2269 from Methanoculleus marisnigri (strain ATCC 35101 / DSM 1498 / JR1).